The following is a 219-amino-acid chain: Protein-L-isoaspartate O-methyltransferase 2 (219 aa).

The active site involves Ser-60.

The protein belongs to the methyltransferase superfamily. L-isoaspartyl/D-aspartyl protein methyltransferase family.

It localises to the cytoplasm. The enzyme catalyses [protein]-L-isoaspartate + S-adenosyl-L-methionine = [protein]-L-isoaspartate alpha-methyl ester + S-adenosyl-L-homocysteine. In terms of biological role, catalyzes the methyl esterification of L-isoaspartyl residues in peptides and proteins that result from spontaneous decomposition of normal L-aspartyl and L-asparaginyl residues. It plays a role in the repair and/or degradation of damaged proteins. The sequence is that of Protein-L-isoaspartate O-methyltransferase 2 (pcm2) from Archaeoglobus fulgidus (strain ATCC 49558 / DSM 4304 / JCM 9628 / NBRC 100126 / VC-16).